Here is a 1560-residue protein sequence, read N- to C-terminus: uncharacterized protein (1560 aa).

Residues 1 to 46 are disordered; that stretch reads MEEIENAHYQNLENFNDETSEDVNDTSDDINKNNDDNNKYDDNNVN. Positions 15 to 28 are enriched in acidic residues; the sequence is FNDETSEDVNDTSD. The segment covering 29–46 has biased composition (basic and acidic residues); sequence DINKNNDDNNKYDDNNVN. Coiled coils occupy residues 36 to 60 and 317 to 359; these read DNNKYDDNNVNVLDDKNKLENEEDN and KKNN…NNNN. The disordered stretch occupies residues 568 to 594; it reads KKKKKKNDHHERDSDNNNNDSNNNNYY. A compositionally biased stretch (low complexity) spans 583 to 594; the sequence is NNNNDSNNNNYY. Positions 1188-1239 form a coiled coil; that stretch reads DTTNNILNKQNESLDNLKKNMYLSKNNYDNQLSSYKNTKQNKTNINEKYNNN. 2 helical membrane-spanning segments follow: residues 1271 to 1291 and 1314 to 1334; these read LYISSMLYINIYLCQIFFILL and LDYFYLLILLNFYSLFYILIS.

The protein resides in the membrane. This is an uncharacterized protein from Plasmodium falciparum (isolate 3D7).